The sequence spans 294 residues: 4-hydroxy-tetrahydrodipicolinate synthase (294 aa).

T45 is a pyruvate binding site. Y133 acts as the Proton donor/acceptor in catalysis. Residue K161 is the Schiff-base intermediate with substrate of the active site. Position 203 (I203) interacts with pyruvate.

The protein belongs to the DapA family. In terms of assembly, homotetramer; dimer of dimers.

The protein localises to the cytoplasm. It carries out the reaction L-aspartate 4-semialdehyde + pyruvate = (2S,4S)-4-hydroxy-2,3,4,5-tetrahydrodipicolinate + H2O + H(+). It participates in amino-acid biosynthesis; L-lysine biosynthesis via DAP pathway; (S)-tetrahydrodipicolinate from L-aspartate: step 3/4. Functionally, catalyzes the condensation of (S)-aspartate-beta-semialdehyde [(S)-ASA] and pyruvate to 4-hydroxy-tetrahydrodipicolinate (HTPA). The protein is 4-hydroxy-tetrahydrodipicolinate synthase of Shewanella sp. (strain MR-7).